A 77-amino-acid polypeptide reads, in one-letter code: UPF0270 protein Spro_4577 (77 aa).

The protein belongs to the UPF0270 family.

This is UPF0270 protein Spro_4577 from Serratia proteamaculans (strain 568).